The primary structure comprises 380 residues: Chaperone protein DnaJ (380 aa).

In terms of domain architecture, J spans 6 to 71 (DYYAILEVSR…QKRAAYDQYG (66 aa)). The CR-type zinc finger occupies 136 to 215 (GVKKDVRVIT…CHGEGTVEKE (80 aa)). Zn(2+)-binding residues include Cys149, Cys152, Cys167, Cys170, Cys189, Cys192, Cys203, and Cys206. CXXCXGXG motif repeat units lie at residues 149 to 156 (CEACHGTG), 167 to 174 (CPSCHGAG), 189 to 196 (CPTCHGAG), and 203 to 210 (CKVCHGEG).

This sequence belongs to the DnaJ family. Homodimer. Zn(2+) is required as a cofactor.

The protein localises to the cytoplasm. In terms of biological role, participates actively in the response to hyperosmotic and heat shock by preventing the aggregation of stress-denatured proteins and by disaggregating proteins, also in an autonomous, DnaK-independent fashion. Unfolded proteins bind initially to DnaJ; upon interaction with the DnaJ-bound protein, DnaK hydrolyzes its bound ATP, resulting in the formation of a stable complex. GrpE releases ADP from DnaK; ATP binding to DnaK triggers the release of the substrate protein, thus completing the reaction cycle. Several rounds of ATP-dependent interactions between DnaJ, DnaK and GrpE are required for fully efficient folding. Also involved, together with DnaK and GrpE, in the DNA replication of plasmids through activation of initiation proteins. The sequence is that of Chaperone protein DnaJ from Acetobacter pasteurianus (strain NBRC 105184 / IFO 3283-01).